Reading from the N-terminus, the 235-residue chain is MNSKTGPSVGDATLRRRIKPWEFVAFFNPQELRKETCLLYEIKWGNQNIWRHSNQNTSQHAEINFMEKFTAERHFNSSVRCSITWFLSWSPCWECSKAIRKFLDHYPNVTLAIFISRLYWHMDQQHRQGLKELVHSGVTIQIMSYSEYHYCWRNFVDYPQGEEDYWPKYPYLWIMLYVLELHCIILGLPPCLKISGSHSNQLALFSLDLQDCHYQKIPYNVLVATGLVQPFVTWR.

One can recognise a CMP/dCMP-type deaminase domain in the interval 10-131; that stretch reads GDATLRRRIK…MDQQHRQGLK (122 aa). Residue H60 participates in Zn(2+) binding. E62 acts as the Proton donor in catalysis. 2 residues coordinate Zn(2+): C92 and C95.

It belongs to the cytidine and deoxycytidylate deaminase family. As to quaternary structure, homodimer. Interacts with A1CF; form an mRNA editing complex. Interacts with RBM47; form an mRNA editing complex. Found in a complex with CELF2/CUGBP2 and A1CF. Interacts with HNRPAB. Interacts with SYNCRIP. Requires Zn(2+) as cofactor.

It localises to the cytoplasm. The protein resides in the nucleus. The enzyme catalyses a cytidine in mRNA + H2O + H(+) = a uridine in mRNA + NH4(+). It catalyses the reaction cytidine(6666) in apoB mRNA + H2O + H(+) = uridine(6666) in apoB mRNA + NH4(+). Functionally, cytidine deaminase catalyzing the cytidine to uridine postranscriptional editing of a variety of mRNAs. Form complexes with cofactors that confer differential editing activity and selectivity. Responsible for the postranscriptional editing of a CAA codon for Gln to a UAA codon for stop in the apolipoprotein B mRNA. Also involved in CGA (Arg) to UGA (Stop) editing in the NF1 mRNA. May also play a role in the epigenetic regulation of gene expression by participating in DNA demethylation. The protein is C-&gt;U-editing enzyme APOBEC-1 of Monodelphis domestica (Gray short-tailed opossum).